Here is a 117-residue protein sequence, read N- to C-terminus: Immunoglobulin heavy variable 1-69-2 (117 aa).

An N-terminal signal peptide occupies residues 1–19 (MDCTWRILLLVAAATGTHA). Positions 20–44 (EVQLVQSGAEVKKPGATVKISCKVS) are framework-1. Residues 20-117 (EVQLVQSGAE…EDTAVYYCAT (98 aa)) enclose the Ig-like domain. Cysteines 41 and 115 form a disulfide. The complementarity-determining-1 stretch occupies residues 45 to 52 (GYTFTDYY). Positions 53 to 69 (MHWVQQAPGKGLEWMGL) are framework-2. The tract at residues 70-77 (VDPEDGET) is complementarity-determining-2. Positions 78–115 (IYAEKFQGRVTITADTSTDTAYMELSSLRSEDTAVYYC) are framework-3. The tract at residues 116–117 (AT) is complementarity-determining-3.

Immunoglobulins are composed of two identical heavy chains and two identical light chains; disulfide-linked.

It localises to the secreted. It is found in the cell membrane. V region of the variable domain of immunoglobulin heavy chains that participates in the antigen recognition. Immunoglobulins, also known as antibodies, are membrane-bound or secreted glycoproteins produced by B lymphocytes. In the recognition phase of humoral immunity, the membrane-bound immunoglobulins serve as receptors which, upon binding of a specific antigen, trigger the clonal expansion and differentiation of B lymphocytes into immunoglobulins-secreting plasma cells. Secreted immunoglobulins mediate the effector phase of humoral immunity, which results in the elimination of bound antigens. The antigen binding site is formed by the variable domain of one heavy chain, together with that of its associated light chain. Thus, each immunoglobulin has two antigen binding sites with remarkable affinity for a particular antigen. The variable domains are assembled by a process called V-(D)-J rearrangement and can then be subjected to somatic hypermutations which, after exposure to antigen and selection, allow affinity maturation for a particular antigen. This is Immunoglobulin heavy variable 1-69-2 from Homo sapiens (Human).